The primary structure comprises 314 residues: Malate dehydrogenase (314 aa).

Residues 11–16 and Asp-35 each bind NAD(+); that span reads GSGNIG. Substrate-binding residues include Arg-84 and Arg-90. NAD(+)-binding positions include Asn-97 and 120 to 122; that span reads ITN. Substrate is bound by residues Asn-122 and Arg-153. Catalysis depends on His-177, which acts as the Proton acceptor.

It belongs to the LDH/MDH superfamily. MDH type 3 family.

It carries out the reaction (S)-malate + NAD(+) = oxaloacetate + NADH + H(+). Functionally, catalyzes the reversible oxidation of malate to oxaloacetate. The sequence is that of Malate dehydrogenase from Rickettsia bellii (strain OSU 85-389).